Reading from the N-terminus, the 103-residue chain is MQNQRIRIRLKAFDYKLIDASTAEIVETAKRTGAQVRGPIPLPTRKERFTVLISPHVNKDARDQYEIRTHKRLIDIVEPTDKTVDALMRLDLAAGVDVQISLG.

Belongs to the universal ribosomal protein uS10 family. As to quaternary structure, part of the 30S ribosomal subunit.

Functionally, involved in the binding of tRNA to the ribosomes. The chain is Small ribosomal subunit protein uS10 from Vibrio cholerae serotype O1 (strain ATCC 39541 / Classical Ogawa 395 / O395).